The primary structure comprises 248 residues: Coproheme decarboxylase (248 aa).

Residues Arg-130, 144 to 148 (YPMDK), His-171, Gln-184, and Ser-222 contribute to the Fe-coproporphyrin III site. The active site involves Tyr-144.

This sequence belongs to the ChdC family. Type 1 subfamily. Requires Fe-coproporphyrin III as cofactor.

It catalyses the reaction Fe-coproporphyrin III + 2 H2O2 + 2 H(+) = heme b + 2 CO2 + 4 H2O. It carries out the reaction Fe-coproporphyrin III + H2O2 + H(+) = harderoheme III + CO2 + 2 H2O. The catalysed reaction is harderoheme III + H2O2 + H(+) = heme b + CO2 + 2 H2O. Its pathway is porphyrin-containing compound metabolism; protoheme biosynthesis. Its function is as follows. Involved in coproporphyrin-dependent heme b biosynthesis. Catalyzes the decarboxylation of Fe-coproporphyrin III (coproheme) to heme b (protoheme IX), the last step of the pathway. The reaction occurs in a stepwise manner with a three-propionate intermediate. The chain is Coproheme decarboxylase from Geobacillus thermodenitrificans (strain NG80-2).